Consider the following 283-residue polypeptide: Lipoyl synthase (283 aa).

[4Fe-4S] cluster is bound by residues Cys-35, Cys-40, Cys-46, Cys-61, Cys-65, Cys-68, and Ser-273. Positions 47-262 (FRERQATFLI…RAAALATGFA (216 aa)) constitute a Radical SAM core domain.

Belongs to the radical SAM superfamily. Lipoyl synthase family. Requires [4Fe-4S] cluster as cofactor.

It is found in the cytoplasm. It carries out the reaction [[Fe-S] cluster scaffold protein carrying a second [4Fe-4S](2+) cluster] + N(6)-octanoyl-L-lysyl-[protein] + 2 oxidized [2Fe-2S]-[ferredoxin] + 2 S-adenosyl-L-methionine + 4 H(+) = [[Fe-S] cluster scaffold protein] + N(6)-[(R)-dihydrolipoyl]-L-lysyl-[protein] + 4 Fe(3+) + 2 hydrogen sulfide + 2 5'-deoxyadenosine + 2 L-methionine + 2 reduced [2Fe-2S]-[ferredoxin]. It functions in the pathway protein modification; protein lipoylation via endogenous pathway; protein N(6)-(lipoyl)lysine from octanoyl-[acyl-carrier-protein]: step 2/2. Its function is as follows. Catalyzes the radical-mediated insertion of two sulfur atoms into the C-6 and C-8 positions of the octanoyl moiety bound to the lipoyl domains of lipoate-dependent enzymes, thereby converting the octanoylated domains into lipoylated derivatives. This is Lipoyl synthase from Geobacter metallireducens (strain ATCC 53774 / DSM 7210 / GS-15).